Here is a 351-residue protein sequence, read N- to C-terminus: tRNA-specific 2-thiouridylase MnmA (351 aa).

ATP contacts are provided by residues 7–14 and L33; that span reads GLSGGVDS. C94 (nucleophile) is an active-site residue. C94 and C193 are disulfide-bonded. Residue G119 participates in ATP binding. The interval 143–145 is interaction with tRNA; the sequence is KDQ. The active-site Cysteine persulfide intermediate is C193. Residues 298-299 form an interaction with tRNA region; sequence RY.

This sequence belongs to the MnmA/TRMU family.

Its subcellular location is the cytoplasm. It catalyses the reaction S-sulfanyl-L-cysteinyl-[protein] + uridine(34) in tRNA + AH2 + ATP = 2-thiouridine(34) in tRNA + L-cysteinyl-[protein] + A + AMP + diphosphate + H(+). Functionally, catalyzes the 2-thiolation of uridine at the wobble position (U34) of tRNA, leading to the formation of s(2)U34. This chain is tRNA-specific 2-thiouridylase MnmA, found in Nostoc punctiforme (strain ATCC 29133 / PCC 73102).